Consider the following 421-residue polypeptide: Heterogeneous nuclear ribonucleoprotein 27C (421 aa).

2 consecutive RRM domains span residues 7 to 88 and 96 to 173; these read GKLF…RTLQ and YKVF…KAEP. Disordered stretches follow at residues 171–191 and 240–373; these read AEPR…GGAY and GTSP…SEYD. Phosphoserine is present on Ser177. The segment covering 240–250 has biased composition (polar residues); the sequence is GTSPQQQQYGY. The span at 264–273 shows a compositional bias: pro residues; the sequence is PPGPQGPPPQ. Positions 275–284 are enriched in polar residues; it reads SNYAGPQQTQ. The span at 293-302 shows a compositional bias: low complexity; that stretch reads NSTSTGAPSG. A phosphoserine mark is found at Ser366, Ser368, and Ser370. A Phosphotyrosine modification is found at Tyr372. Residue Ser379 is modified to Phosphoserine. The interval 392–421 is disordered; it reads EGASNYGAGPRSAYGNDSSTQPPYATSQAV. Positions 406-421 are enriched in polar residues; it reads GNDSSTQPPYATSQAV.

As to quaternary structure, interacts with sqd; the interaction is RNA-dependent and may be specific for sqd isoform A/sqdA. Interacts with otu; the interaction is RNA-independent.

It localises to the nucleus. Its subcellular location is the cytoplasm. This protein is a component of ribonucleosomes. Could be needed to organize a concentration gradient of a dorsalizing morphogen (Dm) originating in the germinal vesicle. Interacts with grk mRNA (via 3' UTR) and involved in its localization to the dorsal anterior region of the oocyte during dorsal-ventral axis determination; may function as a ribonuclear protein complex together with sqd and otu. Required for polytene chromosome dispersal in nurse cells during oogenesis. May be involved in the regulation of splicing. In Drosophila melanogaster (Fruit fly), this protein is Heterogeneous nuclear ribonucleoprotein 27C.